The primary structure comprises 520 residues: METKSQNLKDKLYMWYKVRELQSKGLNKTQIGKYLGVDRSTVRRYLRTSREELFRKQNSHREYELKLGKYEEYVRGTLEEYPYISAARMHDWLKECYPDFPRVCDKTVFNFVDRIRRKYGIGKKSEVRIRRDYEKLPETPYGEYAQADFGEKWIPVKNGGSTKVYFFAIVLTRSRYKFIHFSRRPFDTELAIYAHELAFQYFGGRPEKIIYDQDRVLIARENLGDLILTGKFQSFIKEQHFQPVFCRRSDPESKGKVENVVKYVKENFLVARVLQDIPGLNEEARKWLERTGNGKVHGTTRLVPSEEFAVEKGYLKPYYGLPQPPQEQMKEYHVRKDNTVQYRGNYYSLPCGTYRSGQTRVWLQETEGYVELYSKETGKIVARHPLCTRKGKTIYDERHRRPKSIGAQKLAERILVYVSGNREVALWMENLKRKKERYYKDNLEVVLHMMPGYDKDILIEAVHICLDKGIYNGDSVKSLCEHVHRRRNKETETDRTDSCPPRQTGLIQSYNEIFHGYDKT.

The HTH IS21-type domain maps to 13–78 (YMWYKVRELQ…KYEEYVRGTL (66 aa)). The 177-residue stretch at 136 to 312 (LPETPYGEYA…VPSEEFAVEK (177 aa)) folds into the Integrase catalytic domain.

The protein belongs to the transposase IS21/IS408/IS1162 family.

Functionally, involved in the transposition of the insertion sequence. This chain is Transposase for insertion sequence element IS21-like (tnpA), found in Bacteroides fragilis.